The sequence spans 383 residues: Large ribosomal subunit protein uL2m (383 aa).

Disordered stretches follow at residues 97 to 122 (FPKK…GGGH) and 322 to 357 (MNAN…YKTR). Basic residues-rich tracts occupy residues 106 to 122 (GRNH…GGGH) and 330 to 340 (GGGRGKSKGNR).

This sequence belongs to the universal ribosomal protein uL2 family. In terms of assembly, component of the mitochondrial large ribosomal subunit (mt-LSU). Mature N.crassa 74S mitochondrial ribosomes consist of a small (37S) and a large (54S) subunit. The 37S small subunit contains a 16S ribosomal RNA (16S mt-rRNA) and 32 different proteins. The 54S large subunit contains a 23S rRNA (23S mt-rRNA) and 42 different proteins.

It localises to the mitochondrion. In terms of biological role, component of the mitochondrial ribosome (mitoribosome), a dedicated translation machinery responsible for the synthesis of mitochondrial genome-encoded proteins, including at least some of the essential transmembrane subunits of the mitochondrial respiratory chain. The mitoribosomes are attached to the mitochondrial inner membrane and translation products are cotranslationally integrated into the membrane. In Neurospora crassa (strain ATCC 24698 / 74-OR23-1A / CBS 708.71 / DSM 1257 / FGSC 987), this protein is Large ribosomal subunit protein uL2m (rml2).